The primary structure comprises 394 residues: Probable fimbrial assembly protein FimD, serogroup H1 (394 aa).

The polypeptide is Probable fimbrial assembly protein FimD, serogroup H1 (fimD) (Dichelobacter nodosus (Bacteroides nodosus)).